A 60-amino-acid chain; its full sequence is Large ribosomal subunit protein bL32 (60 aa).

It belongs to the bacterial ribosomal protein bL32 family.

This is Large ribosomal subunit protein bL32 (rpmF) from Borreliella burgdorferi (strain ATCC 35210 / DSM 4680 / CIP 102532 / B31) (Borrelia burgdorferi).